The primary structure comprises 265 residues: Chlorophyll a-b binding protein 1A, chloroplastic (265 aa).

Residues 1 to 34 (MAAAAMALSSPSFAGQAVKLSPSASENSGNGRIT) constitute a chloroplast transit peptide. Residues 151–171 (LVHAQSILAIWACQVVLMGAV) traverse the membrane as a helical segment. Positions 152, 156, 164, 172, 175, and 181 each coordinate chlorophyll b. The chlorophyll a site is built by Lys-212, Glu-213, Asn-216, Arg-218, Gln-230, His-245, and Ala-254. A helical membrane pass occupies residues 219–239 (LAMFSMFGFFVQAIVTGKGPL). Chlorophyll b is bound at residue Phe-261.

The protein belongs to the light-harvesting chlorophyll a/b-binding (LHC) protein family. As to quaternary structure, the LHC complex consists of chlorophyll a-b binding proteins. Binds at least 14 chlorophylls (8 Chl-a and 6 Chl-b) and carotenoids such as lutein and neoxanthin. serves as cofactor. In terms of processing, photoregulated by reversible phosphorylation of its threonine residues.

It is found in the plastid. It localises to the chloroplast thylakoid membrane. In terms of biological role, the light-harvesting complex (LHC) functions as a light receptor, it captures and delivers excitation energy to photosystems with which it is closely associated. This Solanum lycopersicum (Tomato) protein is Chlorophyll a-b binding protein 1A, chloroplastic (CAB1A).